The following is a 179-amino-acid chain: ATP synthase subunit delta (179 aa).

It belongs to the ATPase delta chain family. In terms of assembly, F-type ATPases have 2 components, F(1) - the catalytic core - and F(0) - the membrane proton channel. F(1) has five subunits: alpha(3), beta(3), gamma(1), delta(1), epsilon(1). F(0) has three main subunits: a(1), b(2) and c(10-14). The alpha and beta chains form an alternating ring which encloses part of the gamma chain. F(1) is attached to F(0) by a central stalk formed by the gamma and epsilon chains, while a peripheral stalk is formed by the delta and b chains.

Its subcellular location is the cell membrane. In terms of biological role, f(1)F(0) ATP synthase produces ATP from ADP in the presence of a proton or sodium gradient. F-type ATPases consist of two structural domains, F(1) containing the extramembraneous catalytic core and F(0) containing the membrane proton channel, linked together by a central stalk and a peripheral stalk. During catalysis, ATP synthesis in the catalytic domain of F(1) is coupled via a rotary mechanism of the central stalk subunits to proton translocation. Its function is as follows. This protein is part of the stalk that links CF(0) to CF(1). It either transmits conformational changes from CF(0) to CF(1) or is implicated in proton conduction. The chain is ATP synthase subunit delta from Listeria innocua serovar 6a (strain ATCC BAA-680 / CLIP 11262).